The chain runs to 288 residues: Alpha-acetolactate decarboxylase (288 aa).

The signal sequence occupies residues 1–23 (MNIKYFLIFLILLAVTSFTLFSG).

Belongs to the alpha-acetolactate decarboxylase family.

It catalyses the reaction (2S)-2-acetolactate + H(+) = (R)-acetoin + CO2. It participates in polyol metabolism; (R,R)-butane-2,3-diol biosynthesis; (R,R)-butane-2,3-diol from pyruvate: step 2/3. In terms of biological role, converts acetolactate into acetoin. The chain is Alpha-acetolactate decarboxylase from Methanosarcina mazei (strain ATCC BAA-159 / DSM 3647 / Goe1 / Go1 / JCM 11833 / OCM 88) (Methanosarcina frisia).